We begin with the raw amino-acid sequence, 441 residues long: Methionine aminopeptidase 2A (441 aa).

The segment at 1–103 is disordered; sequence MAIGNPEVAT…SGDFPQGEIQ (103 aa). The span at 18–33 shows a compositional bias: polar residues; it reads AESSNGNESQLSSDLT. Positions 37–62 are enriched in basic and acidic residues; it reads DLAEVKEDEKDNNQEEEDGLKAEAST. Residues 63–76 show a composition bias toward basic residues; that stretch reads KKKKKKSKSKKKKS. Histidine 194 contributes to the substrate binding site. Residues aspartate 214, aspartate 225, and histidine 294 each contribute to the a divalent metal cation site. Histidine 302 serves as a coordination point for substrate. The a divalent metal cation site is built by glutamate 327 and glutamate 422.

The protein belongs to the peptidase M24A family. Methionine aminopeptidase eukaryotic type 2 subfamily. Co(2+) is required as a cofactor. It depends on Zn(2+) as a cofactor. The cofactor is Mn(2+). Requires Fe(2+) as cofactor. In terms of tissue distribution, ubiquitous. Preferentially expressed in roots.

Its subcellular location is the cytoplasm. It carries out the reaction Release of N-terminal amino acids, preferentially methionine, from peptides and arylamides.. In terms of biological role, cotranslationally removes the N-terminal methionine from nascent proteins. The N-terminal methionine is often cleaved when the second residue in the primary sequence is small and uncharged (Met-Ala-, Cys, Gly, Pro, Ser, Thr, or Val). This is Methionine aminopeptidase 2A from Arabidopsis thaliana (Mouse-ear cress).